We begin with the raw amino-acid sequence, 156 residues long: Ribosomal RNA large subunit methyltransferase H (156 aa).

Residues leucine 73, glycine 104, and 123–128 contribute to the S-adenosyl-L-methionine site; that span reads ISSMTL.

Belongs to the RNA methyltransferase RlmH family. As to quaternary structure, homodimer.

Its subcellular location is the cytoplasm. The enzyme catalyses pseudouridine(1915) in 23S rRNA + S-adenosyl-L-methionine = N(3)-methylpseudouridine(1915) in 23S rRNA + S-adenosyl-L-homocysteine + H(+). Specifically methylates the pseudouridine at position 1915 (m3Psi1915) in 23S rRNA. This chain is Ribosomal RNA large subunit methyltransferase H, found in Burkholderia vietnamiensis (strain G4 / LMG 22486) (Burkholderia cepacia (strain R1808)).